The primary structure comprises 208 residues: Large ribosomal subunit protein bL17 (208 aa).

A disordered region spans residues Thr-122 to Glu-208. Over residues Ala-151 to Glu-179 the composition is skewed to low complexity.

It belongs to the bacterial ribosomal protein bL17 family. Part of the 50S ribosomal subunit. Contacts protein L32.

This is Large ribosomal subunit protein bL17 from Desulfosudis oleivorans (strain DSM 6200 / JCM 39069 / Hxd3) (Desulfococcus oleovorans).